Here is a 629-residue protein sequence, read N- to C-terminus: tRNA uridine 5-carboxymethylaminomethyl modification enzyme MnmG (629 aa).

13–18 is a binding site for FAD; it reads GGGHAG. An NAD(+)-binding site is contributed by 273 to 287; sequence GPRYCPSIEDKVNRF.

It belongs to the MnmG family. In terms of assembly, homodimer. Heterotetramer of two MnmE and two MnmG subunits. FAD serves as cofactor.

Its subcellular location is the cytoplasm. Functionally, NAD-binding protein involved in the addition of a carboxymethylaminomethyl (cmnm) group at the wobble position (U34) of certain tRNAs, forming tRNA-cmnm(5)s(2)U34. In Hahella chejuensis (strain KCTC 2396), this protein is tRNA uridine 5-carboxymethylaminomethyl modification enzyme MnmG.